A 339-amino-acid chain; its full sequence is tRNA N6-adenosine threonylcarbamoyltransferase (339 aa).

Residues His111 and His115 each contribute to the Fe cation site. Substrate is bound by residues Val134–Gly138, Asp167, Gly180, and Asn279. A Fe cation-binding site is contributed by Asp307.

Belongs to the KAE1 / TsaD family. Fe(2+) serves as cofactor.

The protein localises to the cytoplasm. The enzyme catalyses L-threonylcarbamoyladenylate + adenosine(37) in tRNA = N(6)-L-threonylcarbamoyladenosine(37) in tRNA + AMP + H(+). Its function is as follows. Required for the formation of a threonylcarbamoyl group on adenosine at position 37 (t(6)A37) in tRNAs that read codons beginning with adenine. Is involved in the transfer of the threonylcarbamoyl moiety of threonylcarbamoyl-AMP (TC-AMP) to the N6 group of A37, together with TsaE and TsaB. TsaD likely plays a direct catalytic role in this reaction. In Syntrophobacter fumaroxidans (strain DSM 10017 / MPOB), this protein is tRNA N6-adenosine threonylcarbamoyltransferase.